The sequence spans 209 residues: Small ribosomal subunit protein uS4 (209 aa).

A disordered region spans residues 22 to 45 (RGRNPLLRKPNPPGQHGMQRKKKS). Positions 93 to 154 (CRLDNIVYRL…KSKRLAIVTE (62 aa)) constitute an S4 RNA-binding domain.

Belongs to the universal ribosomal protein uS4 family. In terms of assembly, part of the 30S ribosomal subunit. Contacts protein S5. The interaction surface between S4 and S5 is involved in control of translational fidelity.

In terms of biological role, one of the primary rRNA binding proteins, it binds directly to 16S rRNA where it nucleates assembly of the body of the 30S subunit. Its function is as follows. With S5 and S12 plays an important role in translational accuracy. In Chlamydia trachomatis serovar A (strain ATCC VR-571B / DSM 19440 / HAR-13), this protein is Small ribosomal subunit protein uS4.